A 425-amino-acid chain; its full sequence is 3-deoxy-D-manno-octulosonic acid transferase (425 aa).

Residues 3–23 (ELLYTALLYLIQPLIWIRLWV) traverse the membrane as a helical; Signal-anchor segment. The active-site Proton acceptor is the E60. CMP-binding positions include 268–269 (PR), 309–311 (MGE), and 335–338 (NPLE).

This sequence belongs to the glycosyltransferase group 1 family. Glycosyltransferase 30 subfamily.

It localises to the cell inner membrane. It carries out the reaction lipid IVA (E. coli) + CMP-3-deoxy-beta-D-manno-octulosonate = alpha-Kdo-(2-&gt;6)-lipid IVA (E. coli) + CMP + H(+). It catalyses the reaction alpha-Kdo-(2-&gt;6)-lipid IVA (E. coli) + CMP-3-deoxy-beta-D-manno-octulosonate = alpha-Kdo-(2-&gt;4)-alpha-Kdo-(2-&gt;6)-lipid IVA (E. coli) + CMP + H(+). It participates in glycolipid biosynthesis; KDO(2)-lipid A biosynthesis; KDO(2)-lipid A from CMP-3-deoxy-D-manno-octulosonate and lipid IV(A): step 1/4. Its pathway is glycolipid biosynthesis; KDO(2)-lipid A biosynthesis; KDO(2)-lipid A from CMP-3-deoxy-D-manno-octulosonate and lipid IV(A): step 2/4. It functions in the pathway bacterial outer membrane biogenesis; LPS core biosynthesis. Its function is as follows. Involved in lipopolysaccharide (LPS) biosynthesis. Catalyzes the transfer of two 3-deoxy-D-manno-octulosonate (Kdo) residues from CMP-Kdo to lipid IV(A), the tetraacyldisaccharide-1,4'-bisphosphate precursor of lipid A. The protein is 3-deoxy-D-manno-octulosonic acid transferase (waaA) of Escherichia coli O157:H7.